Consider the following 159-residue polypeptide: NADH-quinone oxidoreductase subunit B (159 aa).

Cysteine 36, cysteine 37, cysteine 102, and cysteine 132 together coordinate [4Fe-4S] cluster.

This sequence belongs to the complex I 20 kDa subunit family. In terms of assembly, NDH-1 is composed of 14 different subunits. Subunits NuoB, C, D, E, F, and G constitute the peripheral sector of the complex. Requires [4Fe-4S] cluster as cofactor.

Its subcellular location is the cell inner membrane. The enzyme catalyses a quinone + NADH + 5 H(+)(in) = a quinol + NAD(+) + 4 H(+)(out). Its function is as follows. NDH-1 shuttles electrons from NADH, via FMN and iron-sulfur (Fe-S) centers, to quinones in the respiratory chain. The immediate electron acceptor for the enzyme in this species is believed to be ubiquinone. Couples the redox reaction to proton translocation (for every two electrons transferred, four hydrogen ions are translocated across the cytoplasmic membrane), and thus conserves the redox energy in a proton gradient. The polypeptide is NADH-quinone oxidoreductase subunit B (Acidovorax ebreus (strain TPSY) (Diaphorobacter sp. (strain TPSY))).